The sequence spans 228 residues: Cutinase (228 aa).

The N-terminal stretch at 1-16 is a signal peptide; that stretch reads MKFLSIISLAVSLVAA. The cysteines at positions 49 and 129 are disulfide-linked. The active-site Nucleophile is S140. An intrachain disulfide couples C191 to C198. The active site involves D195. H208 serves as the catalytic Proton donor/acceptor.

This sequence belongs to the cutinase family. Post-translationally, the 2 disulfide bonds play a critical role in holding the catalytic residues in juxta-position; reduction of the disulfide bridges results in the complete inactivation of the enzyme.

It is found in the secreted. The enzyme catalyses cutin + H2O = cutin monomers.. With respect to regulation, partially inhibited by berberine; higher inhibitory effects are observed with longer chain polyester substrates. Functionally, catalyzes the hydrolysis of complex carboxylic polyesters found in the cell wall of plants. Degrades cutin, a macromolecule that forms the structure of the plant cuticle. Allows pathogenic fungi to penetrate through the cuticular barrier into the host plant during the initial stage of fungal infection. This Colletotrichum truncatum (Anthracnose fungus) protein is Cutinase (CUTA).